Here is a 103-residue protein sequence, read N- to C-terminus: MYAVILSGGKQHRVAEGQVLRLEKLEAATGAAVEFDKVLMVTNGDDVKVGAPYVAGGKVVAEVVAHGRGDKVHIVKFRRRKHHRKQAGHRQWFTEVKITAINA.

Belongs to the bacterial ribosomal protein bL21 family. Part of the 50S ribosomal subunit. Contacts protein L20.

Its function is as follows. This protein binds to 23S rRNA in the presence of protein L20. The protein is Large ribosomal subunit protein bL21 of Tolumonas auensis (strain DSM 9187 / NBRC 110442 / TA 4).